The primary structure comprises 321 residues: Mas-related G-protein coupled receptor member H (321 aa).

Residues 1–35 (MEPLAMTLYPLESTQPTRNKTPNETTWSSEHTDDH) lie on the Extracellular side of the membrane. The N-linked (GlcNAc...) asparagine glycan is linked to Asn23. Residues 36–56 (TYFLVSLVICSLGLAGNGLLI) traverse the membrane as a helical segment. Residues 57-71 (WFLIFCIKRKPFTIY) lie on the Cytoplasmic side of the membrane. The chain crosses the membrane as a helical span at residues 72 to 92 (ILHLAIADFMVLLCSSIMKLV). The Extracellular portion of the chain corresponds to 93–102 (NTFHIYNMTL). An N-linked (GlcNAc...) asparagine glycan is attached at Asn99. A helical transmembrane segment spans residues 103-126 (ESYAILFMIFGYNTGLHLLTAISV). The Cytoplasmic portion of the chain corresponds to 127–147 (ERCLSVLYPIWYQCQRPKHQS). A helical membrane pass occupies residues 148–168 (AVACMLLWALSVLVSGLENFF). At 169–188 (CILEVKPQFPECRYVYIFSC) the chain is on the extracellular side. The helical transmembrane segment at 189–209 (ILTFLVFVPLMIFSNLILFIQ) threads the bilayer. Over 210–225 (VCCNLKPRQPTKLYVI) the chain is Cytoplasmic. A helical membrane pass occupies residues 226 to 246 (IMTTVILFLVFAMPMKVLLII). Residue Gly247 is a topological domain, extracellular. A helical membrane pass occupies residues 248–271 (YYSSSLDDSVWDSLPYLNMLSTIN). Over 272–320 (CSINPIVYFVVGSLRRKRSRKSLKEALQKVFEEKPVVASRENVTQFSLP) the chain is Cytoplasmic.

This sequence belongs to the G-protein coupled receptor 1 family. Mas subfamily.

It localises to the cell membrane. Its function is as follows. Orphan receptor. May regulate nociceptor function and/or development, including the sensation or modulation of pain. This Mus musculus (Mouse) protein is Mas-related G-protein coupled receptor member H (Mrgprh).